Here is a 381-residue protein sequence, read N- to C-terminus: Alcohol dehydrogenase class-3 (381 aa).

Residue C49 coordinates Zn(2+). H50 provides a ligand contact to NAD(+). 2 residues coordinate an alcohol: T51 and H71. Zn(2+) contacts are provided by H71, E72, C101, C104, C107, C115, and C179. NAD(+) contacts are provided by residues 204 to 209 (GLGTVG), D228, K233, I274, 297 to 299 (VGV), 322 to 324 (TAF), and R374.

It belongs to the zinc-containing alcohol dehydrogenase family. Class-III subfamily. Homodimer. The cofactor is Zn(2+). In terms of tissue distribution, expressed at low levels in the leaves.

Its subcellular location is the cytoplasm. The catalysed reaction is a primary alcohol + NAD(+) = an aldehyde + NADH + H(+). It carries out the reaction a secondary alcohol + NAD(+) = a ketone + NADH + H(+). It catalyses the reaction S-(hydroxymethyl)glutathione + NADP(+) = S-formylglutathione + NADPH + H(+). The enzyme catalyses S-(hydroxymethyl)glutathione + NAD(+) = S-formylglutathione + NADH + H(+). In Zea mays (Maize), this protein is Alcohol dehydrogenase class-3 (FDH).